The sequence spans 199 residues: NAD(P)H dehydrogenase (quinone) (199 aa).

The region spanning 4–190 (VLVLYYSSYG…TGARYQGRKI (187 aa)) is the Flavodoxin-like domain. FMN is bound by residues 10–15 (SSYGHL) and 78–80 (TRF). Tyr12 lines the NAD(+) pocket. Trp98 lines the substrate pocket. FMN-binding positions include 113–119 (STATQHG) and His134.

Belongs to the WrbA family. It depends on FMN as a cofactor.

The catalysed reaction is a quinone + NADH + H(+) = a quinol + NAD(+). It catalyses the reaction a quinone + NADPH + H(+) = a quinol + NADP(+). This chain is NAD(P)H dehydrogenase (quinone), found in Caulobacter vibrioides (strain ATCC 19089 / CIP 103742 / CB 15) (Caulobacter crescentus).